The primary structure comprises 446 residues: Packaging protein 1 (446 aa).

The segment at 1–72 (MEEKAGLRHL…SQVSKSKKQR (72 aa)) is disordered. Residues 10-21 (LQNQQNEPSQDP) show a composition bias toward polar residues. The span at 32–43 (HSDRNHLNKEAE) shows a compositional bias: basic and acidic residues. 170–177 (GPTGCGKS) serves as a coordination point for ATP. Positions 439–446 (RYYHSKKK) are DNA-binding.

This sequence belongs to the adenoviridae packaging protein 1 family. As to quaternary structure, homodimer. Part of a genome packaging complex composed of packaging proteins 1, 2 and 3; this complex specifically binds to the packaging sequence on the left end of viral genomic DNA and performs packaging of the viral genome. Interacts with protein 33K.

The protein resides in the virion. It localises to the host nucleus. It is found in the host nucleoplasm. The protein localises to the host nucleolus. In terms of biological role, component of the packaging machinery which encapsidates the viral DNA into preformed capsids and transcriptional activator of the viral major late promoter (MLP). Binds, along with packaging proteins 2 and 3, to the specific packaging sequence on the left end of viral genomic DNA and displays ATPase activity thereby providing the power stroke of the packaging machinery. The activity of packaging protein IVa2 is stimulated by protein 33K which acts as a terminase. May be the protein that pumps DNA into the capsid powered by ATP hydrolysis. Specifically binds to the 5'-CG-3' nucleotides of the repeats making up the packaging sequence. Component of the DEF-A and DEF-B transcription factors that bind downstream elements of the major late promoter (MLP), and stimulate transcription from the MLP after initiation of viral DNA replication. DEF-A is a heterodimer packaging proteins 1 and 2 and DEF-B is a homodimer of packaging protein 1. The sequence is that of Packaging protein 1 from Canine adenovirus serotype 1 (strain CLL) (CAdV-1).